An 898-amino-acid polypeptide reads, in one-letter code: MLRTIVTKIFGSRNDRILRRLNKQVRIINKLEAEFELLTDEELKSKTTEFRTRLKNGEKLENLIPEAFATVREASKRILGMRPFDVQLIGGMVLNNRCIAEMRTGEGKTLTATLPCYLNALTGKGVHVVTVNDYLARRDAETNRPLFEFLGMTVGINVPGLSPEEKRAAYAADITYATNSELGFDYLRDNLAHSAQDRFQKHLHYALVDEVDSILIDEARTPLIISGPAEDSSELYMAMDKLIPILIQQDKEDTEEYQGDGDFTLDLKNKQAHLTERGQEKIEQWLMEKGFINENESLYSPARISLLHHIYAALRAHKLFERDVDYIVKNGEIVIVDEHTGRTMAGRRWSDGLHQAIEAKEGVQIQGENQTVASITYQNYFRLYEKLAGMTGTADTEAFEFQQIYGLETIVIPTNKPMIRDDRTDIMFENEKYKFDAIIEDIKDCVARNQPVLVGTISIEKSELLSNALSKAGIKHNVLNAKFHAQEAEIIANAGYPSAVTIATNMAGRGTDIVLGGNWKAEVAKLDNPTEEQIEAIKAAWQIRHETVKQAGGLHIIGTERHESRRIDNQLRGRSGRQGDPGSSRFYLSLDDALMRIYLTEGKLNFMRKMFTEKGEGMESKMLAKVIAQAQAKVEAHNFDGRKNLLEFDDVANDQRHAIYEQRNTLLDNEDIAETIQVIRQDVFNHVIDEYVPPHSLEEQWDIPALETRLKQDFALDLPLSKWLEEDNTFNEDVLRERVLAVAISEYKRKEELVGQEAMRNFEKGVMLQTLDELWKEHLSAMDHLRRGIHLRGYAQKDPKQEYKKESFQMFTDMLDTLKLSVITTLSRVQIRTQDEVEKAEQARQKIAERENAAMQYQNNEGTSSLHEKSEHKIGRNESCPCGSGKKYKHCHGSKAKY.

ATP is bound by residues glutamine 87, 105-109 (GEGKT), and aspartate 512. Residues 855–865 (MQYQNNEGTSS) show a composition bias toward polar residues. Residues 855–898 (MQYQNNEGTSSLHEKSEHKIGRNESCPCGSGKKYKHCHGSKAKY) form a disordered region. Over residues 866–876 (LHEKSEHKIGR) the composition is skewed to basic and acidic residues. 4 residues coordinate Zn(2+): cysteine 880, cysteine 882, cysteine 891, and histidine 892. Basic residues predominate over residues 886–898 (KKYKHCHGSKAKY).

It belongs to the SecA family. Monomer and homodimer. Part of the essential Sec protein translocation apparatus which comprises SecA, SecYEG and auxiliary proteins SecDF-YajC and YidC. The cofactor is Zn(2+).

It localises to the cell inner membrane. It is found in the cytoplasm. The catalysed reaction is ATP + H2O + cellular proteinSide 1 = ADP + phosphate + cellular proteinSide 2.. Functionally, part of the Sec protein translocase complex. Interacts with the SecYEG preprotein conducting channel. Has a central role in coupling the hydrolysis of ATP to the transfer of proteins into and across the cell membrane, serving both as a receptor for the preprotein-SecB complex and as an ATP-driven molecular motor driving the stepwise translocation of polypeptide chains across the membrane. This Histophilus somni (strain 2336) (Haemophilus somnus) protein is Protein translocase subunit SecA.